The following is a 188-amino-acid chain: Threonylcarbamoyl-AMP synthase (188 aa).

The 186-residue stretch at 3–188 (QLHPSDIKDV…RSGKILRNGQ (186 aa)) folds into the YrdC-like domain.

Belongs to the SUA5 family. TsaC subfamily.

It localises to the cytoplasm. The catalysed reaction is L-threonine + hydrogencarbonate + ATP = L-threonylcarbamoyladenylate + diphosphate + H2O. In terms of biological role, required for the formation of a threonylcarbamoyl group on adenosine at position 37 (t(6)A37) in tRNAs that read codons beginning with adenine. Catalyzes the conversion of L-threonine, HCO(3)(-)/CO(2) and ATP to give threonylcarbamoyl-AMP (TC-AMP) as the acyladenylate intermediate, with the release of diphosphate. The polypeptide is Threonylcarbamoyl-AMP synthase (Shewanella oneidensis (strain ATCC 700550 / JCM 31522 / CIP 106686 / LMG 19005 / NCIMB 14063 / MR-1)).